The following is a 245-amino-acid chain: Complement C1q subcomponent subunit C (245 aa).

Positions 1–28 (MDVGPSSLPHLGLKLLLLLLLLPLRGQA) are cleaved as a signal peptide. Residues 31–112 (GCYGIPGMPG…GIPGEPGEEG (82 aa)) form the Collagen-like domain. 6 positions are modified to 4-hydroxyproline: proline 36, proline 39, proline 42, proline 45, proline 54, and proline 63. The disordered stretch occupies residues 45-113 (PGKDGYDGLP…IPGEPGEEGR (69 aa)). The segment covering 54 to 71 (PGPKGEPGIPAIPGIRGP) has biased composition (low complexity). The residue at position 75 (lysine 75) is a 5-hydroxylysine. Lysine 75 carries O-linked (Gal...) hydroxylysine glycosylation. 4-hydroxyproline occurs at positions 81, 93, 96, 99, and 105. The segment covering 90 to 99 (MGPPGMPGVP) has biased composition (pro residues). Residues 115–245 (KQKFQSVFTV…VFSGFLLFPD (131 aa)) enclose the C1q domain. A disulfide bond links cysteine 179 and cysteine 193.

In terms of assembly, core component of the complement C1 complex, a calcium-dependent complex composed of 1 molecule of the C1Q subcomplex, 2 molecules of C1R and 2 molecules of C1S. The C1Q subcomplex is composed 18 subunits: 3 chains of C1QA, C1QB, and C1QC trimerize to form 6 collagen-like triple helices connected to six globular ligand-recognition modules (C1q domain). O-linked glycans consist of Glc-Gal disaccharides bound to the oxygen atom of post-translationally added hydroxyl groups.

The protein resides in the secreted. It localises to the cell surface. With respect to regulation, the C1Q subcomplex is inhibited by sulfated molecules, such as triterpenoid sulfates, heparan sulfate, or chondroitin sulfates. Core component of the complement C1 complex, a multiprotein complex that initiates the classical pathway of the complement system, a cascade of proteins that leads to phagocytosis and breakdown of pathogens and signaling that strengthens the adaptive immune system. The classical complement pathway is initiated by the C1Q subcomplex of the C1 complex, which specifically binds IgG or IgM immunoglobulins complexed with antigens, forming antigen-antibody complexes on the surface of pathogens: C1QA, together with C1QB and C1QC, specifically recognizes and binds the Fc regions of IgG or IgM via its C1q domain. Immunoglobulin-binding activates the proenzyme C1R, which cleaves C1S, initiating the proteolytic cascade of the complement system. The C1Q subcomplex is activated by a hexamer of IgG complexed with antigens, while it is activated by a pentameric IgM. The C1Q subcomplex also recognizes and binds phosphatidylserine exposed on the surface of cells undergoing programmed cell death, possibly promoting activation of the complement system. This chain is Complement C1q subcomponent subunit C, found in Homo sapiens (Human).